Here is a 417-residue protein sequence, read N- to C-terminus: Serine hydroxymethyltransferase (417 aa).

Residues Leu-121 and Gly-125–Leu-127 contribute to the (6S)-5,6,7,8-tetrahydrofolate site. N6-(pyridoxal phosphate)lysine is present on Lys-230. Ser-355–Phe-357 contacts (6S)-5,6,7,8-tetrahydrofolate.

It belongs to the SHMT family. Homodimer. Pyridoxal 5'-phosphate serves as cofactor.

The protein resides in the cytoplasm. It catalyses the reaction (6R)-5,10-methylene-5,6,7,8-tetrahydrofolate + glycine + H2O = (6S)-5,6,7,8-tetrahydrofolate + L-serine. The protein operates within one-carbon metabolism; tetrahydrofolate interconversion. It functions in the pathway amino-acid biosynthesis; glycine biosynthesis; glycine from L-serine: step 1/1. Functionally, catalyzes the reversible interconversion of serine and glycine with tetrahydrofolate (THF) serving as the one-carbon carrier. This reaction serves as the major source of one-carbon groups required for the biosynthesis of purines, thymidylate, methionine, and other important biomolecules. Also exhibits THF-independent aldolase activity toward beta-hydroxyamino acids, producing glycine and aldehydes, via a retro-aldol mechanism. The chain is Serine hydroxymethyltransferase from Legionella pneumophila (strain Lens).